The sequence spans 150 residues: Cytochrome c oxidase subunit 5A, mitochondrial (150 aa).

The transit peptide at 1 to 41 directs the protein to the mitochondrion; sequence MLGAALRRCAVAATTWAGPRGHLHSARTPGPAAAIQSVRCY. The short motif at 2-17 is the SIFI-degron element; it reads LGAALRRCAVAATTWA. Residues Lys-87 and Lys-113 each carry the N6-acetyllysine modification. A Phosphothreonine modification is found at Thr-141.

It belongs to the cytochrome c oxidase subunit 5A family. As to quaternary structure, component of the cytochrome c oxidase (complex IV, CIV), a multisubunit enzyme composed of 14 subunits. The complex is composed of a catalytic core of 3 subunits MT-CO1, MT-CO2 and MT-CO3, encoded in the mitochondrial DNA, and 11 supernumerary subunits COX4I, COX5A, COX5B, COX6A, COX6B, COX6C, COX7A, COX7B, COX7C, COX8 and NDUFA4, which are encoded in the nuclear genome. The complex exists as a monomer or a dimer and forms supercomplexes (SCs) in the inner mitochondrial membrane with NADH-ubiquinone oxidoreductase (complex I, CI) and ubiquinol-cytochrome c oxidoreductase (cytochrome b-c1 complex, complex III, CIII), resulting in different assemblies (supercomplex SCI(1)III(2)IV(1) and megacomplex MCI(2)III(2)IV(2)). Interacts with AFG1L. Interacts with RAB5IF. In response to mitochondrial stress, the precursor protein is ubiquitinated by the SIFI complex in the cytoplasm before mitochondrial import, leading to its degradation. Within the SIFI complex, UBR4 initiates ubiquitin chain that are further elongated or branched by KCMF1.

The protein resides in the mitochondrion inner membrane. It participates in energy metabolism; oxidative phosphorylation. Component of the cytochrome c oxidase, the last enzyme in the mitochondrial electron transport chain which drives oxidative phosphorylation. The respiratory chain contains 3 multisubunit complexes succinate dehydrogenase (complex II, CII), ubiquinol-cytochrome c oxidoreductase (cytochrome b-c1 complex, complex III, CIII) and cytochrome c oxidase (complex IV, CIV), that cooperate to transfer electrons derived from NADH and succinate to molecular oxygen, creating an electrochemical gradient over the inner membrane that drives transmembrane transport and the ATP synthase. Cytochrome c oxidase is the component of the respiratory chain that catalyzes the reduction of oxygen to water. Electrons originating from reduced cytochrome c in the intermembrane space (IMS) are transferred via the dinuclear copper A center (CU(A)) of subunit 2 and heme A of subunit 1 to the active site in subunit 1, a binuclear center (BNC) formed by heme A3 and copper B (CU(B)). The BNC reduces molecular oxygen to 2 water molecules using 4 electrons from cytochrome c in the IMS and 4 protons from the mitochondrial matrix. This is Cytochrome c oxidase subunit 5A, mitochondrial (COX5A) from Symphalangus syndactylus (Siamang).